The primary structure comprises 71 residues: Small ribosomal subunit protein bS21 (71 aa).

The protein belongs to the bacterial ribosomal protein bS21 family.

The chain is Small ribosomal subunit protein bS21 from Shewanella sediminis (strain HAW-EB3).